A 489-amino-acid chain; its full sequence is Glycogen synthase (489 aa).

An ADP-alpha-D-glucose-binding site is contributed by Arg20.

Belongs to the glycosyltransferase 1 family. Bacterial/plant glycogen synthase subfamily.

It catalyses the reaction [(1-&gt;4)-alpha-D-glucosyl](n) + ADP-alpha-D-glucose = [(1-&gt;4)-alpha-D-glucosyl](n+1) + ADP + H(+). Its pathway is glycan biosynthesis; glycogen biosynthesis. Synthesizes alpha-1,4-glucan chains using ADP-glucose. This is Glycogen synthase from Chlorobium phaeobacteroides (strain DSM 266 / SMG 266 / 2430).